The following is a 326-amino-acid chain: Transmembrane protein 171 (326 aa).

Helical transmembrane passes span 22–42 (IFFL…LSIF), 57–77 (MMLK…VILA), 114–134 (LIFG…GIWV), and 161–181 (FLSL…FFVV). A disordered region spans residues 229–326 (FPESSASAAA…LSPSSEPSPP (98 aa)). A compositionally biased stretch (low complexity) spans 230 to 240 (PESSASAAARS). Over residues 257-266 (SIFQSGSPTP) the composition is skewed to polar residues. Low complexity-rich tracts occupy residues 288-302 (SSSE…LSEL) and 312-326 (ATTT…PSPP).

It localises to the membrane. This is Transmembrane protein 171 (TMEM171) from Bos taurus (Bovine).